Consider the following 325-residue polypeptide: Eukaryotic translation initiation factor 3 subunit I (325 aa).

WD repeat units lie at residues 8 to 47 (GHER…RLGT), 50 to 91 (GHTG…ALLK), 144 to 183 (CNDS…VLVN), and 186 to 225 (EHSR…HQKT). T219 is subject to Phosphothreonine. K264 carries the post-translational modification N6-acetyllysine. K282 participates in a covalent cross-link: Glycyl lysine isopeptide (Lys-Gly) (interchain with G-Cter in ubiquitin). Residues 283–324 (GHFGPINSVAFHPDGKSYSSGGEDGYVRIHYFDPQYFEFEFE) form a WD 5 repeat. Residue Y308 is modified to Phosphotyrosine.

Belongs to the eIF-3 subunit I family. In terms of assembly, component of the eukaryotic translation initiation factor 3 (eIF-3) complex, which is composed of 13 subunits: EIF3A, EIF3B, EIF3C, EIF3D, EIF3E, EIF3F, EIF3G, EIF3H, EIF3I, EIF3J, EIF3K, EIF3L and EIF3M. The eIF-3 complex appears to include 3 stable modules: module A is composed of EIF3A, EIF3B, EIF3G and EIF3I; module B is composed of EIF3F, EIF3H, and EIF3M; and module C is composed of EIF3C, EIF3D, EIF3E, EIF3K and EIF3L. EIF3C of module C binds EIF3B of module A and EIF3H of module B, thereby linking the three modules. EIF3J is a labile subunit that binds to the eIF-3 complex via EIF3B. The eIF-3 complex interacts with RPS6KB1 under conditions of nutrient depletion. Mitogenic stimulation leads to binding and activation of a complex composed of MTOR and RPTOR, leading to phosphorylation and release of RPS6KB1 and binding of EIF4B to eIF-3. Post-translationally, phosphorylated by TGF-beta type II receptor.

The protein resides in the cytoplasm. In terms of biological role, component of the eukaryotic translation initiation factor 3 (eIF-3) complex, which is required for several steps in the initiation of protein synthesis. The eIF-3 complex associates with the 40S ribosome and facilitates the recruitment of eIF-1, eIF-1A, eIF-2:GTP:methionyl-tRNAi and eIF-5 to form the 43S pre-initiation complex (43S PIC). The eIF-3 complex stimulates mRNA recruitment to the 43S PIC and scanning of the mRNA for AUG recognition. The eIF-3 complex is also required for disassembly and recycling of post-termination ribosomal complexes and subsequently prevents premature joining of the 40S and 60S ribosomal subunits prior to initiation. The eIF-3 complex specifically targets and initiates translation of a subset of mRNAs involved in cell proliferation, including cell cycling, differentiation and apoptosis, and uses different modes of RNA stem-loop binding to exert either translational activation or repression. The polypeptide is Eukaryotic translation initiation factor 3 subunit I (Bos taurus (Bovine)).